The primary structure comprises 552 residues: uncharacterized protein (552 aa).

4 consecutive transmembrane segments (helical) span residues 127–147 (AIML…ISLL), 160–180 (LIIV…YINI), 393–413 (LTKQ…LSAV), and 517–537 (VIDS…FICI).

Its subcellular location is the membrane. This is an uncharacterized protein from Saccharomyces cerevisiae (strain ATCC 204508 / S288c) (Baker's yeast).